The chain runs to 178 residues: PEST proteolytic signal-containing nuclear protein (178 aa).

The span at 1 to 15 shows a compositional bias: basic and acidic residues; the sequence is MADGKAGDEKPEKSQ. Positions 1–82 are disordered; that stretch reads MADGKAGDEK…FAIGSQTTKK (82 aa). An N-acetylalanine modification is found at alanine 2. Residues 37–47 show a composition bias toward low complexity; sequence SSSNGGESSSR. Position 53 is a phosphoserine (serine 53). Lysine 64 carries the N6-acetyllysine modification. Phosphoserine is present on residues serine 77, serine 87, and serine 119. A disordered region spans residues 134–178; it reads NIGRDTPTSAGPNSFNKGKHGFSDNQKLWERNIKSHLGNVHDQDN. Threonine 139 carries the phosphothreonine modification. A compositionally biased stretch (polar residues) spans 139 to 149; that stretch reads TPTSAGPNSFN. Serine 147 is modified (phosphoserine). An N6-acetyllysine mark is found at lysine 150 and lysine 152. Residues 160-178 show a composition bias toward basic and acidic residues; the sequence is KLWERNIKSHLGNVHDQDN.

As to quaternary structure, interacts with UHRF2/NIRF. In terms of processing, ubiquitinated; mediated by UHRF2 and leading to its subsequent proteasomal degradation. Post-translationally, N-terminally acetylated in a HYPK-dependent manner by the NatA acetyltransferase complex which is composed of NAA10 and NAA15.

It localises to the nucleus. In terms of biological role, may be involved in cell cycle regulation. This Homo sapiens (Human) protein is PEST proteolytic signal-containing nuclear protein (PCNP).